The chain runs to 92 residues: Small ribosomal subunit protein uS19 (92 aa).

It belongs to the universal ribosomal protein uS19 family.

Its function is as follows. Protein S19 forms a complex with S13 that binds strongly to the 16S ribosomal RNA. In Bradyrhizobium diazoefficiens (strain JCM 10833 / BCRC 13528 / IAM 13628 / NBRC 14792 / USDA 110), this protein is Small ribosomal subunit protein uS19.